A 134-amino-acid chain; its full sequence is Ribosome-binding factor A (134 aa).

This sequence belongs to the RbfA family. Monomer. Binds 30S ribosomal subunits, but not 50S ribosomal subunits or 70S ribosomes.

Its subcellular location is the cytoplasm. One of several proteins that assist in the late maturation steps of the functional core of the 30S ribosomal subunit. Associates with free 30S ribosomal subunits (but not with 30S subunits that are part of 70S ribosomes or polysomes). Required for efficient processing of 16S rRNA. May interact with the 5'-terminal helix region of 16S rRNA. In Bartonella bacilliformis (strain ATCC 35685 / KC583 / Herrer 020/F12,63), this protein is Ribosome-binding factor A.